A 237-amino-acid chain; its full sequence is Demethylmenaquinone methyltransferase (237 aa).

S-adenosyl-L-methionine contacts are provided by residues Thr58, Asp79, and 106 to 107 (NA).

Belongs to the class I-like SAM-binding methyltransferase superfamily. MenG/UbiE family.

It carries out the reaction a 2-demethylmenaquinol + S-adenosyl-L-methionine = a menaquinol + S-adenosyl-L-homocysteine + H(+). It functions in the pathway quinol/quinone metabolism; menaquinone biosynthesis; menaquinol from 1,4-dihydroxy-2-naphthoate: step 2/2. Functionally, methyltransferase required for the conversion of demethylmenaquinol (DMKH2) to menaquinol (MKH2). The protein is Demethylmenaquinone methyltransferase of Bacillus cereus (strain B4264).